The chain runs to 446 residues: Tektin-4 (446 aa).

Coiled-coil stretches lie at residues 182 to 215 (IRNV…MDYS), 297 to 346 (DAIA…NDKS), and 378 to 422 (SEVG…ANSI).

It belongs to the tektin family.

It is found in the cytoplasm. The protein localises to the cytoskeleton. Its subcellular location is the cilium axoneme. The protein resides in the cell projection. It localises to the cilium. It is found in the flagellum. In terms of biological role, microtubule inner protein (MIP) part of the dynein-decorated doublet microtubules (DMTs) in cilia and flagellar axoneme. Forms filamentous polymers in the walls of ciliary and flagellar microtubules. Contributes to normal sperm motility. The protein is Tektin-4 (tekt4) of Xenopus laevis (African clawed frog).